A 517-amino-acid polypeptide reads, in one-letter code: Splicing factor cactin (517 aa).

The span at 1–14 (MAFRDSTRDFNRSR) shows a compositional bias: basic and acidic residues. The interval 1–59 (MAFRDSTRDFNRSRPEKRHASRSSSPRSFRPSNQNARANYNLPRVRDAMKEEERSRETK) is disordered. Low complexity predominate over residues 22 to 32 (RSSSPRSFRPS). The span at 44–59 (RVRDAMKEEERSRETK) shows a compositional bias: basic and acidic residues.

It belongs to the CACTIN family. In terms of assembly, interacts with sde2. Interacts with cdc5.

Functionally, plays a role in pre-mRNA splicing by facilitating excision of introns featuring long spacing between the branchpoint and 3'-splice site (ss). Recruited to the spliceosome by sde2, which may enable folding of the RNA between the BP and 3'-ss to guide the splice site towards the spliceosome's catalytic center. Assists the splicing of several components involved in chromatin organization. The sequence is that of Splicing factor cactin from Schizosaccharomyces pombe (strain 972 / ATCC 24843) (Fission yeast).